The chain runs to 151 residues: MLP-like protein 329 (151 aa).

This sequence belongs to the MLP family.

This is MLP-like protein 329 (MLP329) from Arabidopsis thaliana (Mouse-ear cress).